Reading from the N-terminus, the 305-residue chain is Methionyl-tRNA formyltransferase (305 aa).

108-111 (SLLP) lines the (6S)-5,6,7,8-tetrahydrofolate pocket.

It belongs to the Fmt family.

It catalyses the reaction L-methionyl-tRNA(fMet) + (6R)-10-formyltetrahydrofolate = N-formyl-L-methionyl-tRNA(fMet) + (6S)-5,6,7,8-tetrahydrofolate + H(+). In terms of biological role, attaches a formyl group to the free amino group of methionyl-tRNA(fMet). The formyl group appears to play a dual role in the initiator identity of N-formylmethionyl-tRNA by promoting its recognition by IF2 and preventing the misappropriation of this tRNA by the elongation apparatus. The polypeptide is Methionyl-tRNA formyltransferase (Clavibacter michiganensis subsp. michiganensis (strain NCPPB 382)).